The following is a 374-amino-acid chain: 3-dehydroquinate synthase (374 aa).

This sequence belongs to the archaeal-type DHQ synthase family.

The enzyme catalyses 2-amino-2,3,7-trideoxy-D-lyxo-hept-6-ulosonate + NAD(+) + H2O = 3-dehydroquinate + NH4(+) + NADH + H(+). Functionally, catalyzes the oxidative deamination and cyclization of 2-amino-3,7-dideoxy-D-threo-hept-6-ulosonic acid (ADH) to yield 3-dehydroquinate (DHQ), which is fed into the canonical shikimic pathway of aromatic amino acid biosynthesis. The polypeptide is 3-dehydroquinate synthase (Methanothermobacter thermautotrophicus (strain ATCC 29096 / DSM 1053 / JCM 10044 / NBRC 100330 / Delta H) (Methanobacterium thermoautotrophicum)).